Reading from the N-terminus, the 262-residue chain is Flap endonuclease Xni (262 aa).

Position 109 (Asp109) interacts with Mg(2+). The 5'-3' exonuclease domain occupies 165–255 (LKPEQLADYW…FNLQDIRYEK (91 aa)). Residues Leu176, Ala177, Ile187, and Val190 each coordinate K(+). The segment at 189–194 (GVGPKA) is interaction with DNA.

This sequence belongs to the Xni family. Mg(2+) serves as cofactor. The cofactor is K(+).

In terms of biological role, has flap endonuclease activity. During DNA replication, flap endonucleases cleave the 5'-overhanging flap structure that is generated by displacement synthesis when DNA polymerase encounters the 5'-end of a downstream Okazaki fragment. The chain is Flap endonuclease Xni from Aliivibrio fischeri (strain MJ11) (Vibrio fischeri).